The following is a 55-amino-acid chain: Large ribosomal subunit protein bL33 (55 aa).

Positions 1–11 (MAKGSREKIKL) are enriched in basic and acidic residues. Residues 1 to 32 (MAKGSREKIKLESSASTGHFYTTSKNKRTKPE) are disordered. Over residues 13-24 (SSASTGHFYTTS) the composition is skewed to polar residues.

Belongs to the bacterial ribosomal protein bL33 family.

This chain is Large ribosomal subunit protein bL33, found in Polynucleobacter necessarius subsp. necessarius (strain STIR1).